Consider the following 144-residue polypeptide: MRLNDLHPAEGSRPEGKRVGRGIGSGLGKTGGRGHKGQKSRSGGSVKPGFEGGQMPLQRRVPKFGFTSKLAMGTAEVRLAELAKVEGDVIDLASLKAANIVRRDMKRAKIVLQGEIDRAVTVRGVALTKGAREAVEKAGGKVEE.

Positions 1-18 are enriched in basic and acidic residues; that stretch reads MRLNDLHPAEGSRPEGKR. The segment at 1-58 is disordered; that stretch reads MRLNDLHPAEGSRPEGKRVGRGIGSGLGKTGGRGHKGQKSRSGGSVKPGFEGGQMPLQ. The segment covering 21–31 has biased composition (gly residues); sequence RGIGSGLGKTG.

This sequence belongs to the universal ribosomal protein uL15 family. Part of the 50S ribosomal subunit.

Binds to the 23S rRNA. This is Large ribosomal subunit protein uL15 from Alcanivorax borkumensis (strain ATCC 700651 / DSM 11573 / NCIMB 13689 / SK2).